Consider the following 855-residue polypeptide: Inactive rhomboid protein 1 (855 aa).

The segment at 1 to 36 is disordered; it reads MSEARRDSTSSLQRKKPPWLKLDIPSAAPPAAEEPS. Residues 1 to 411 lie on the Cytoplasmic side of the membrane; that stretch reads MSEARRDSTS…HRPFFTYWLT (411 aa). Positions 25–36 are enriched in low complexity; sequence PSAAPPAAEEPS. 2 positions are modified to phosphoserine: S76 and S176. 2 positions are modified to phosphothreonine: T180 and T183. S390 is modified (phosphoserine). A helical transmembrane segment spans residues 412-432; sequence FVHSLVTVLAVCIYGIAPVGF. Residues 433–655 lie on the Lumenal side of the membrane; sequence SQHETVDSVL…NPEVPDQFYR (223 aa). An N-linked (GlcNAc...) asparagine glycan is attached at N583. A helical transmembrane segment spans residues 656–676; sequence LWLSLFLHAGILHCLVSICFQ. Residues 677–691 lie on the Cytoplasmic side of the membrane; it reads MTVLRDLEKLAGWHR. Residues 692–712 traverse the membrane as a helical segment; it reads IAIIYLLSGVTGNLASAIFLP. The Lumenal portion of the chain corresponds to 713–714; sequence YR. Residues 715–735 form a helical membrane-spanning segment; it reads AEVGPAGSQFGILACLFVELF. At 736–746 the chain is on the cytoplasmic side; that stretch reads QSWQILARPWR. The chain crosses the membrane as a helical span at residues 747 to 767; sequence AFFKLLAVVLFLFTFGLLPWI. Residues 768–772 lie on the Lumenal side of the membrane; sequence DNFAH. Residues 773 to 793 form a helical membrane-spanning segment; it reads ISGFISGLFLSFAFLPYISFG. Residues 794–803 are Cytoplasmic-facing; that stretch reads KFDLYRKRCQ. A helical membrane pass occupies residues 804–824; the sequence is IIVFQVVFLGLLAGLVVLFYF. Topologically, residues 825 to 855 are lumenal; the sequence is YPVRCEWCEFLTCIPFTDKFCEKYELDAQLH.

Belongs to the peptidase S54 family. Homodimer, or homooligomer. Interacts with TGFA and HBEGF. Interacts with EGF; may retain EGF in the endoplasmic reticulum and regulates its degradation through the endoplasmic reticulum-associated degradation (ERAD). Interacts (via cytoplasmic N-terminus) with FRMD8/iTAP; this interaction leads to mutual protein stabilization. Interacts with ADAM17/TACE.

It localises to the endoplasmic reticulum membrane. Its subcellular location is the golgi apparatus membrane. Regulates ADAM17 protease, a sheddase of the epidermal growth factor (EGF) receptor ligands and TNF, thereby plays a role in sleep, cell survival, proliferation, migration and inflammation. Does not exhibit any protease activity on its own. This is Inactive rhomboid protein 1 (RHBDF1) from Plecturocebus moloch (Dusky titi monkey).